The following is a 187-amino-acid chain: Benzene 1,2-dioxygenase subunit beta (187 aa).

This sequence belongs to the bacterial ring-hydroxylating dioxygenase beta subunit family. This dioxygenase system consists of four proteins: the two subunits of the hydroxylase component (BedC1 and BedC2), a ferredoxin (BedB) and a ferredoxin reductase (BedA).

It catalyses the reaction benzene + NADH + O2 + H(+) = cis-1,2-dihydrobenzene-1,2-diol + NAD(+). It participates in aromatic compound metabolism; benzene degradation; catechol from benzene: step 1/2. Its function is as follows. The beta subunit may be responsible for the substrate specificity of the enzyme. The protein is Benzene 1,2-dioxygenase subunit beta (bedC2) of Pseudomonas putida (Arthrobacter siderocapsulatus).